Here is a 252-residue protein sequence, read N- to C-terminus: Triosephosphate isomerase (252 aa).

11–13 (NWK) is a substrate binding site. Residue H97 is the Electrophile of the active site. E169 functions as the Proton acceptor in the catalytic mechanism. Substrate contacts are provided by residues G175, S215, and 236-237 (GG).

Belongs to the triosephosphate isomerase family. Homodimer.

The protein localises to the cytoplasm. The catalysed reaction is D-glyceraldehyde 3-phosphate = dihydroxyacetone phosphate. It participates in carbohydrate biosynthesis; gluconeogenesis. It functions in the pathway carbohydrate degradation; glycolysis; D-glyceraldehyde 3-phosphate from glycerone phosphate: step 1/1. Its function is as follows. Involved in the gluconeogenesis. Catalyzes stereospecifically the conversion of dihydroxyacetone phosphate (DHAP) to D-glyceraldehyde-3-phosphate (G3P). This is Triosephosphate isomerase from Mycoplasmoides gallisepticum (strain R(low / passage 15 / clone 2)) (Mycoplasma gallisepticum).